Here is a 414-residue protein sequence, read N- to C-terminus: Tyrosine--tRNA ligase (414 aa).

Residue Y35 coordinates L-tyrosine. The short motif at 40 to 49 is the 'HIGH' region element; sequence PTADSLHVGH. L-tyrosine-binding residues include Y164 and Q168. Positions 226 to 230 match the 'KMSKS' region motif; the sequence is KFGKT. K229 is an ATP binding site. The region spanning 347 to 414 is the S4 RNA-binding domain; the sequence is TKVIDALIEV…KKKYFVILIK (68 aa).

Belongs to the class-I aminoacyl-tRNA synthetase family. TyrS type 1 subfamily. Homodimer.

It is found in the cytoplasm. It catalyses the reaction tRNA(Tyr) + L-tyrosine + ATP = L-tyrosyl-tRNA(Tyr) + AMP + diphosphate + H(+). In terms of biological role, catalyzes the attachment of tyrosine to tRNA(Tyr) in a two-step reaction: tyrosine is first activated by ATP to form Tyr-AMP and then transferred to the acceptor end of tRNA(Tyr). The polypeptide is Tyrosine--tRNA ligase (Mycoplasma mycoides subsp. mycoides SC (strain CCUG 32753 / NCTC 10114 / PG1)).